The chain runs to 471 residues: Alpha-1,3/1,6-mannosyltransferase alg-2 (471 aa).

Asn178 and Asn279 each carry an N-linked (GlcNAc...) asparagine glycan. Residues 446–466 (GMILLVVGAAVAAVAGVISAV) traverse the membrane as a helical segment.

The protein belongs to the glycosyltransferase group 1 family. Glycosyltransferase 4 subfamily.

Its subcellular location is the endoplasmic reticulum membrane. It catalyses the reaction a beta-D-Man-(1-&gt;4)-beta-D-GlcNAc-(1-&gt;4)-alpha-D-GlcNAc-diphospho-di-trans,poly-cis-dolichol + GDP-alpha-D-mannose = an alpha-D-Man-(1-&gt;3)-beta-D-Man-(1-&gt;4)-beta-D-GlcNAc-(1-&gt;4)-alpha-D-GlcNAc-diphospho-di-trans,poly-cis-dolichol + GDP + H(+). The enzyme catalyses an alpha-D-Man-(1-&gt;3)-beta-D-Man-(1-&gt;4)-beta-D-GlcNAc-(1-&gt;4)-alpha-D-GlcNAc-diphospho-di-trans,poly-cis-dolichol + GDP-alpha-D-mannose = an alpha-D-Man-(1-&gt;3)-[alpha-D-Man-(1-&gt;6)]-beta-D-Man-(1-&gt;4)-beta-D-GlcNAc-(1-&gt;4)-alpha-D-GlcNAc-diphospho-di-trans,poly-cis-dolichol + GDP + H(+). The protein operates within protein modification; protein glycosylation. Functionally, mannosylates Man(2)GlcNAc(2)-dolichol diphosphate and Man(1)GlcNAc(2)-dolichol diphosphate to form Man(3)GlcNAc(2)-dolichol diphosphate. The polypeptide is Alpha-1,3/1,6-mannosyltransferase alg-2 (alg-2) (Neurospora crassa (strain ATCC 24698 / 74-OR23-1A / CBS 708.71 / DSM 1257 / FGSC 987)).